Reading from the N-terminus, the 245-residue chain is Thiopurine S-methyltransferase (245 aa).

Residue serine 14 is modified to Phosphoserine. 29 to 40 contacts S-adenosyl-L-methionine; it reads WQDKWVNGKTAF. Phenylalanine 40 is a binding site for substrate. An N6-acetyllysine modification is found at lysine 58. S-adenosyl-L-methionine-binding positions include leucine 69, glutamate 90, 134 to 135, and arginine 152; that span reads SI.

The protein belongs to the class I-like SAM-binding methyltransferase superfamily. TPMT family. As to quaternary structure, monomer.

It localises to the cytoplasm. The catalysed reaction is S-adenosyl-L-methionine + a thiopurine = S-adenosyl-L-homocysteine + a thiopurine S-methylether.. The enzyme catalyses mercaptopurine + S-adenosyl-L-methionine = 6-methylthiopurine + S-adenosyl-L-homocysteine + H(+). It carries out the reaction 6-thioguanine + S-adenosyl-L-methionine = 6-methylthioguanine + S-adenosyl-L-homocysteine + H(+). Its activity is regulated as follows. Inhibited by S-adenosyl-L-homocysteine (SAH). Catalyzes the S-methylation of thiopurine drugs such as 6-mercaptopurine (also called mercaptopurine, 6-MP or its brand name Purinethol) and 6-thioguanine (also called tioguanine or 6-TG) using S-adenosyl-L-methionine as the methyl donor. TPMT activity modulates the cytotoxic effects of thiopurine prodrugs. A natural substrate for this enzyme has yet to be identified. This is Thiopurine S-methyltransferase (TPMT) from Homo sapiens (Human).